The following is a 392-amino-acid chain: Copper-containing nitrite reductase (392 aa).

Positions Met1 to Ala18 are cleaved as a signal peptide. Residue Cys19 is the site of N-palmitoyl cysteine attachment. Cys19 carries the S-diacylglycerol cysteine lipid modification. Residues Glu30–Thr49 form a disordered region. Plastocyanin-like domains are found at residues Trp101–Glu195 and Gly245–Glu346. The Cu cation site is built by His134, His139, His174, Cys175, His183, and Met188. Residue His139 participates in substrate binding. His280 provides a ligand contact to substrate. His329 provides a ligand contact to Cu cation. A disordered region spans residues Gly367 to Tyr392. Tandem repeats lie at residues Ala368 to Pro372, Ala373 to Pro377, Ala378 to Pro382, and Ala383 to Ser387. The 4 X 5 AA tandem repeats of A-A-S-A-P stretch occupies residues Ala368 to Ser387.

This sequence belongs to the multicopper oxidase family. As to quaternary structure, homotrimer. The cofactor is Cu(+). It depends on Cu(2+) as a cofactor. In terms of processing, palmitoylated.

The protein resides in the cell outer membrane. The catalysed reaction is nitric oxide + Fe(III)-[cytochrome c] + H2O = Fe(II)-[cytochrome c] + nitrite + 2 H(+). Its function is as follows. Catalyzes the reduction of nitrite to nitric oxide (NO), probably with azurin as electron donor. Essential for growth and survival in oxygen-depleted environments. Can also provide protection against killing by normal human sera. The sequence is that of Copper-containing nitrite reductase (aniA) from Neisseria gonorrhoeae.